We begin with the raw amino-acid sequence, 399 residues long: Formaldehyde dismutase (399 aa).

Cys46 is a binding site for Zn(2+). Gly47–His51 is an NAD(+) binding site. Positions 67, 97, 100, 103, 111, and 170 each coordinate Zn(2+). Position 174 (Thr174) interacts with NAD(+). Residue His177 coordinates Zn(2+). NAD(+) contacts are provided by residues Pro197–Val198, Asp218–Gln219, Arg223, Val263, His268, Pro299, Pro299–Ile301, and Gly336–Ala338.

Belongs to the zinc-containing alcohol dehydrogenase family. In terms of assembly, homotetramer. Zn(2+) is required as a cofactor. The cofactor is NAD(+). It depends on NADH as a cofactor.

It carries out the reaction 2 formaldehyde + H2O = methanol + formate + H(+). Its activity is regulated as follows. Inhibited by the substrate analog pyrazole but not by NAD analogs such as AMP, ADP, ATP or N-methylnicotinamide chloride. In terms of biological role, active against a range of primary alcohols as well as some secondary alcohols. Exhibits higher activity against alcohols with longer carbon chains. This is Formaldehyde dismutase from Pseudomonas putida (Arthrobacter siderocapsulatus).